Here is a 318-residue protein sequence, read N- to C-terminus: 5'-3' exonuclease (318 aa).

The 85-residue stretch at 194–278 (AYAELALLRG…ATDAPVTLST (85 aa)) folds into the 5'-3' exonuclease domain.

Its function is as follows. 5'-3' exonuclease acting preferentially on double-stranded DNA. The chain is 5'-3' exonuclease from Mycobacterium tuberculosis (strain ATCC 25618 / H37Rv).